A 193-amino-acid polypeptide reads, in one-letter code: Penicillin-binding protein activator LpoB (193 aa).

The signal sequence occupies residues 1–16; sequence MKRYLSVALAALVLTG. A lipid anchor (N-palmitoyl cysteine) is attached at cysteine 17. A lipid anchor (S-diacylglycerol cysteine) is attached at cysteine 17. Positions 24–55 are disordered; the sequence is EPTTPPVTIEPVTPPVPETPPPVDNVPPPPKM. Residues 35–54 show a composition bias toward pro residues; sequence VTPPVPETPPPVDNVPPPPK.

The protein belongs to the LpoB family. As to quaternary structure, interacts with PBP1b.

Its subcellular location is the cell outer membrane. Functionally, regulator of peptidoglycan synthesis that is essential for the function of penicillin-binding protein 1B (PBP1b). The chain is Penicillin-binding protein activator LpoB from Yersinia enterocolitica serotype O:8 / biotype 1B (strain NCTC 13174 / 8081).